A 668-amino-acid chain; its full sequence is UvrABC system protein C (668 aa).

The GIY-YIG domain maps to 14-91 (DSPGCYLHKD…IQRYKPKYNI (78 aa)). The 36-residue stretch at 196–231 (KKIVNELEAKMMVSSDNMEFEQAAEYRDVIKAIGTL) folds into the UVR domain.

This sequence belongs to the UvrC family. Interacts with UvrB in an incision complex.

It is found in the cytoplasm. In terms of biological role, the UvrABC repair system catalyzes the recognition and processing of DNA lesions. UvrC both incises the 5' and 3' sides of the lesion. The N-terminal half is responsible for the 3' incision and the C-terminal half is responsible for the 5' incision. The polypeptide is UvrABC system protein C (Lactococcus lactis subsp. lactis (strain IL1403) (Streptococcus lactis)).